The primary structure comprises 89 residues: Small ribosomal subunit protein uS14A (89 aa).

It belongs to the universal ribosomal protein uS14 family. As to quaternary structure, part of the 30S ribosomal subunit. Contacts proteins S3 and S10.

Its function is as follows. Binds 16S rRNA, required for the assembly of 30S particles and may also be responsible for determining the conformation of the 16S rRNA at the A site. The polypeptide is Small ribosomal subunit protein uS14A (Limosilactobacillus reuteri (strain DSM 20016) (Lactobacillus reuteri)).